Here is a 301-residue protein sequence, read N- to C-terminus: Homoserine O-acetyltransferase (301 aa).

Catalysis depends on cysteine 142, which acts as the Acyl-thioester intermediate. Positions 163 and 192 each coordinate substrate. Histidine 235 (proton acceptor) is an active-site residue. Glutamate 237 is an active-site residue. Arginine 249 contacts substrate.

It belongs to the MetA family.

It localises to the cytoplasm. It carries out the reaction L-homoserine + acetyl-CoA = O-acetyl-L-homoserine + CoA. Its pathway is amino-acid biosynthesis; L-methionine biosynthesis via de novo pathway; O-acetyl-L-homoserine from L-homoserine: step 1/1. Transfers an acetyl group from acetyl-CoA to L-homoserine, forming acetyl-L-homoserine. This is Homoserine O-acetyltransferase from Bacillus thuringiensis subsp. konkukian (strain 97-27).